The primary structure comprises 289 residues: (+)-kolavelool synthase (289 aa).

The protein belongs to the diterpene synthase family.

It catalyses the reaction (+)-kolavenyl diphosphate + H2O = (+)-kolavelool + diphosphate. Involved in the biosynthesis of (+)-O-methylkolavelool. Catalyzes the biosynthesis of (+)-kolavelool from (+)-kolavenyl diphosphate via the release of the diphosphate moiety through the nucleophilic addition of a water molecule. This chain is (+)-kolavelool synthase, found in Herpetosiphon aurantiacus (strain ATCC 23779 / DSM 785 / 114-95).